We begin with the raw amino-acid sequence, 338 residues long: Fructose-1,6-bisphosphatase class 1 (338 aa).

The Mg(2+) site is built by Glu94, Asp116, Leu118, and Asp119. Substrate-binding positions include 119–122 (DGSS), Asn210, and Lys276. Glu282 provides a ligand contact to Mg(2+).

The protein belongs to the FBPase class 1 family. As to quaternary structure, homotetramer. The cofactor is Mg(2+).

It localises to the cytoplasm. The catalysed reaction is beta-D-fructose 1,6-bisphosphate + H2O = beta-D-fructose 6-phosphate + phosphate. It functions in the pathway carbohydrate biosynthesis; gluconeogenesis. The polypeptide is Fructose-1,6-bisphosphatase class 1 (Paraburkholderia phytofirmans (strain DSM 17436 / LMG 22146 / PsJN) (Burkholderia phytofirmans)).